A 234-amino-acid chain; its full sequence is MRLVQLSRHSIAFPSPEGALREPNGLLALGGDLSPARLLMAYQRGIFPWFSPGDPILWWSPDPRAVLWPESLHISRSMKRFHKRSPYRVTMNYAFGQVIEGCASDREEGTWITRGVVKAYHRLHELGHAHSIEVWREDELVGGMYGVAQGTLFCGESMFSRMENASKTALLVFCDEFIRHGGKLIDCQVLNDHTASLGACEIPRRDYLNYLNQMRLGRLPNNFWVPRCLFSPQE.

The protein belongs to the L/F-transferase family.

The protein resides in the cytoplasm. The enzyme catalyses N-terminal L-lysyl-[protein] + L-leucyl-tRNA(Leu) = N-terminal L-leucyl-L-lysyl-[protein] + tRNA(Leu) + H(+). The catalysed reaction is N-terminal L-arginyl-[protein] + L-leucyl-tRNA(Leu) = N-terminal L-leucyl-L-arginyl-[protein] + tRNA(Leu) + H(+). It carries out the reaction L-phenylalanyl-tRNA(Phe) + an N-terminal L-alpha-aminoacyl-[protein] = an N-terminal L-phenylalanyl-L-alpha-aminoacyl-[protein] + tRNA(Phe). Functionally, functions in the N-end rule pathway of protein degradation where it conjugates Leu, Phe and, less efficiently, Met from aminoacyl-tRNAs to the N-termini of proteins containing an N-terminal arginine or lysine. The chain is Leucyl/phenylalanyl-tRNA--protein transferase from Escherichia coli O81 (strain ED1a).